Consider the following 162-residue polypeptide: NADH-quinone oxidoreductase subunit I (162 aa).

4Fe-4S ferredoxin-type domains follow at residues 54–83 and 93–122; these read RRYE…IESE and TRYD…ETQI. 8 residues coordinate [4Fe-4S] cluster: cysteine 63, cysteine 66, cysteine 69, cysteine 73, cysteine 102, cysteine 105, cysteine 108, and cysteine 112.

Belongs to the complex I 23 kDa subunit family. In terms of assembly, NDH-1 is composed of 14 different subunits. Subunits NuoA, H, J, K, L, M, N constitute the membrane sector of the complex. [4Fe-4S] cluster is required as a cofactor.

It is found in the cell inner membrane. The catalysed reaction is a quinone + NADH + 5 H(+)(in) = a quinol + NAD(+) + 4 H(+)(out). In terms of biological role, NDH-1 shuttles electrons from NADH, via FMN and iron-sulfur (Fe-S) centers, to quinones in the respiratory chain. The immediate electron acceptor for the enzyme in this species is believed to be ubiquinone. Couples the redox reaction to proton translocation (for every two electrons transferred, four hydrogen ions are translocated across the cytoplasmic membrane), and thus conserves the redox energy in a proton gradient. This chain is NADH-quinone oxidoreductase subunit I, found in Burkholderia pseudomallei (strain 668).